We begin with the raw amino-acid sequence, 278 residues long: Phosphate import ATP-binding protein PstB (278 aa).

In terms of domain architecture, ABC transporter spans Y32–I273. ATP is bound at residue G64 to S71.

It belongs to the ABC transporter superfamily. Phosphate importer (TC 3.A.1.7) family. As to quaternary structure, the complex is composed of two ATP-binding proteins (PstB), two transmembrane proteins (PstC and PstA) and a solute-binding protein (PstS).

Its subcellular location is the cell membrane. It carries out the reaction phosphate(out) + ATP + H2O = ADP + 2 phosphate(in) + H(+). In terms of biological role, part of the ABC transporter complex PstSACB involved in phosphate import. Responsible for energy coupling to the transport system. The sequence is that of Phosphate import ATP-binding protein PstB from Halalkalibacterium halodurans (strain ATCC BAA-125 / DSM 18197 / FERM 7344 / JCM 9153 / C-125) (Bacillus halodurans).